The following is a 938-amino-acid chain: Isoleucine--tRNA ligase (938 aa).

Residues 58-68 (PYANGSIHIGH) carry the 'HIGH' region motif. N6-acetyllysine is present on K183. E561 contacts L-isoleucyl-5'-AMP. A 'KMSKS' region motif is present at residues 602 to 606 (KMSKS). K605 contributes to the ATP binding site. Positions 901, 904, 921, and 924 each coordinate Zn(2+).

It belongs to the class-I aminoacyl-tRNA synthetase family. IleS type 1 subfamily. As to quaternary structure, monomer. It depends on Zn(2+) as a cofactor.

The protein resides in the cytoplasm. It carries out the reaction tRNA(Ile) + L-isoleucine + ATP = L-isoleucyl-tRNA(Ile) + AMP + diphosphate. Catalyzes the attachment of isoleucine to tRNA(Ile). As IleRS can inadvertently accommodate and process structurally similar amino acids such as valine, to avoid such errors it has two additional distinct tRNA(Ile)-dependent editing activities. One activity is designated as 'pretransfer' editing and involves the hydrolysis of activated Val-AMP. The other activity is designated 'posttransfer' editing and involves deacylation of mischarged Val-tRNA(Ile). This Shigella dysenteriae serotype 1 (strain Sd197) protein is Isoleucine--tRNA ligase.